The following is a 123-amino-acid chain: Probable prefoldin subunit 4 (123 aa).

It belongs to the prefoldin subunit beta family. As to quaternary structure, heterohexamer of two PFD-alpha type and four PFD-beta type subunits.

Its function is as follows. Binds specifically to cytosolic chaperonin (c-CPN) and transfers target proteins to it. Binds to nascent polypeptide chain and promotes folding in an environment in which there are many competing pathways for nonnative proteins. This Schizosaccharomyces pombe (strain 972 / ATCC 24843) (Fission yeast) protein is Probable prefoldin subunit 4.